The primary structure comprises 149 residues: Transcriptional repressor NrdR (149 aa).

A zinc finger lies at 3–34; it reads CPFCSATDTKVIDSRLVSDGHQVRRRRQCLAC. The ATP-cone domain maps to 49 to 139; that stretch reads PKVIKSNGNR…VYRSFEDIKE (91 aa).

The protein belongs to the NrdR family. Requires Zn(2+) as cofactor.

Its function is as follows. Negatively regulates transcription of bacterial ribonucleotide reductase nrd genes and operons by binding to NrdR-boxes. In Aliivibrio fischeri (strain ATCC 700601 / ES114) (Vibrio fischeri), this protein is Transcriptional repressor NrdR.